The following is a 302-amino-acid chain: Deoxyhypusine hydroxylase (302 aa).

HEAT-like PBS-type repeat units lie at residues 23 to 49, 54 to 80, 87 to 113, 175 to 201, 206 to 232, and 239 to 265; these read ERFRALFTLKNIGGKTAIDAISKAFDD, LKHELAYCLGQMQDPTALEILTKVLKD, VRHEAAEAMGAIGHADVLAILEEYKKD, DRYRAMFSLRNLCTEESVLAIAEGLKD, FRHEVAFVLGQLQEPCSIPYLQENLED, and VRHECAEALGAIATDDCIQILTRYADD. Fe cation-binding residues include histidine 56, glutamate 57, histidine 89, and glutamate 90. Residues histidine 208, glutamate 209, histidine 241, and glutamate 242 each contribute to the Fe cation site.

This sequence belongs to the deoxyhypusine hydroxylase family. Fe(2+) serves as cofactor.

Its subcellular location is the endoplasmic reticulum membrane. The catalysed reaction is [eIF5A protein]-deoxyhypusine + AH2 + O2 = [eIF5A protein]-hypusine + A + H2O. It participates in protein modification; eIF5A hypusination. In terms of biological role, catalyzes the hydroxylation of the N(6)-(4-aminobutyl)-L-lysine intermediate to form hypusine, an essential post-translational modification only found in mature eIF-5A factor. Essential for organismal viability and plays a role in a wide number of important processes such as cell growth and proliferation, and regulates induction of autophagy and protein synthesis. Has a role in eIF-5A-mediated translational control. In Drosophila pseudoobscura pseudoobscura (Fruit fly), this protein is Deoxyhypusine hydroxylase.